The chain runs to 166 residues: Small ribosomal subunit protein uS5 (166 aa).

Residues 11–74 (LQEKLIAVNR…EKARRNMMNV (64 aa)) form the S5 DRBM domain.

Belongs to the universal ribosomal protein uS5 family. In terms of assembly, part of the 30S ribosomal subunit. Contacts proteins S4 and S8.

In terms of biological role, with S4 and S12 plays an important role in translational accuracy. Functionally, located at the back of the 30S subunit body where it stabilizes the conformation of the head with respect to the body. This chain is Small ribosomal subunit protein uS5, found in Pectobacterium atrosepticum (strain SCRI 1043 / ATCC BAA-672) (Erwinia carotovora subsp. atroseptica).